We begin with the raw amino-acid sequence, 515 residues long: Maturase K (515 aa).

Belongs to the intron maturase 2 family. MatK subfamily.

It is found in the plastid. The protein localises to the chloroplast. Functionally, usually encoded in the trnK tRNA gene intron. Probably assists in splicing its own and other chloroplast group II introns. This is Maturase K from Cedrus deodara (Deodar cedar).